We begin with the raw amino-acid sequence, 251 residues long: Ubiquinone/menaquinone biosynthesis C-methyltransferase UbiE (251 aa).

Residues T74, D95, and 123–124 (NA) each bind S-adenosyl-L-methionine.

The protein belongs to the class I-like SAM-binding methyltransferase superfamily. MenG/UbiE family.

It carries out the reaction a 2-demethylmenaquinol + S-adenosyl-L-methionine = a menaquinol + S-adenosyl-L-homocysteine + H(+). The catalysed reaction is a 2-methoxy-6-(all-trans-polyprenyl)benzene-1,4-diol + S-adenosyl-L-methionine = a 5-methoxy-2-methyl-3-(all-trans-polyprenyl)benzene-1,4-diol + S-adenosyl-L-homocysteine + H(+). Its pathway is quinol/quinone metabolism; menaquinone biosynthesis; menaquinol from 1,4-dihydroxy-2-naphthoate: step 2/2. It participates in cofactor biosynthesis; ubiquinone biosynthesis. Methyltransferase required for the conversion of demethylmenaquinol (DMKH2) to menaquinol (MKH2) and the conversion of 2-polyprenyl-6-methoxy-1,4-benzoquinol (DDMQH2) to 2-polyprenyl-3-methyl-6-methoxy-1,4-benzoquinol (DMQH2). This is Ubiquinone/menaquinone biosynthesis C-methyltransferase UbiE from Shewanella sediminis (strain HAW-EB3).